Reading from the N-terminus, the 564-residue chain is Urease subunit alpha (564 aa).

Residues 126–564 (GGIDTHIHFI…LPMAQRYFLF (439 aa)) form the Urease domain. Ni(2+)-binding residues include His131, His133, and Lys214. Lys214 is modified (N6-carboxylysine). Residue His216 coordinates substrate. 2 residues coordinate Ni(2+): His243 and His269. The active-site Proton donor is the His317. Residue Asp357 participates in Ni(2+) binding.

This sequence belongs to the metallo-dependent hydrolases superfamily. Urease alpha subunit family. Heterotrimer of UreA (gamma), UreB (beta) and UreC (alpha) subunits. Three heterotrimers associate to form the active enzyme. Ni cation is required as a cofactor. Carboxylation allows a single lysine to coordinate two nickel ions.

The protein resides in the cytoplasm. It catalyses the reaction urea + 2 H2O + H(+) = hydrogencarbonate + 2 NH4(+). It participates in nitrogen metabolism; urea degradation; CO(2) and NH(3) from urea (urease route): step 1/1. The protein is Urease subunit alpha of Burkholderia pseudomallei (strain 1710b).